We begin with the raw amino-acid sequence, 263 residues long: SPRY domain-containing SOCS box protein 2 (263 aa).

Residues 1–16 show a composition bias toward polar residues; it reads MGQTALAGGSSSTPTP. Residues 1-48 form a disordered region; the sequence is MGQTALAGGSSSTPTPQALYPDLSCPEGLEELLSAPPPDLGAQRRHGW. The B30.2/SPRY domain occupies 26 to 221; sequence PEGLEELLSA…VRIRYLGERR (196 aa). An SOCS box domain is found at 222–263; it reads AEPHSLLHLSRLCVRHNLGDTRLGQVSALPLPPAMKRYLLYQ.

The protein belongs to the SPSB family. In terms of assembly, component of the probable ECS(SPSB2) E3 ubiquitin-protein ligase complex which contains CUL5, RNF7/RBX2, Elongin BC complex and SPSB2. Interacts with CUL5, RNF7, ELOB and ELOC. Interacts with MET. Interacts (via B30.2/SPRY domain) with PAWR; this interaction occurs in association with the Elongin BC complex. Interacts with NOS2. As to quaternary structure, (Microbial infection) Interacts (via C-terminus) with HCV envelope glycoprotein E1. Interacts (via C-terminus) with HCV non-structural protein 5A; this interaction targets NS5A for ubiquitination and degradation.

It localises to the cytoplasm. It is found in the cytosol. The protein operates within protein modification; protein ubiquitination. Its function is as follows. Substrate recognition component of a SCF-like ECS (Elongin BC-CUL2/5-SOCS-box protein) E3 ubiquitin-protein ligase complex which mediates the ubiquitination and subsequent proteasomal degradation of target proteins. Negatively regulates nitric oxide (NO) production and limits cellular toxicity in activated macrophages by mediating the ubiquitination and proteasomal degradation of NOS2. Acts as a bridge which links NOS2 with the ECS E3 ubiquitin ligase complex components ELOC and CUL5. The protein is SPRY domain-containing SOCS box protein 2 (SPSB2) of Homo sapiens (Human).